The sequence spans 338 residues: Patr class I histocompatibility antigen, alpha chain G (338 aa).

Residues 1–24 (MVVMAPRTLFLLLSGALTLTETWA) form the signal peptide. Residues 25–114 (GSHSMRYFSA…LRGYYNQSEA (90 aa)) are alpha-1. Residues 25–308 (GSHSMRYFSA…KQSSLPTIPI (284 aa)) are Extracellular-facing. Asn110 carries an N-linked (GlcNAc...) asparagine glycan. The interval 115–206 (SSHTLQWMIG…ENGKEMLQRA (92 aa)) is alpha-2. 2 disulfide bridges follow: Cys125–Cys188 and Cys227–Cys283. The segment at 207–298 (DPPKTHVTHH…GLPEPLMLRW (92 aa)) is alpha-3. The Ig-like C1-type domain occupies 209–299 (PKTHVTHHPV…LPEPLMLRWK (91 aa)). The connecting peptide stretch occupies residues 299–308 (KQSSLPTIPI). Residues 309-332 (MGIVAGLVVLAAVVTGAAVAAVLW) form a helical membrane-spanning segment. The Cytoplasmic portion of the chain corresponds to 333 to 338 (RKKSSD).

The protein belongs to the MHC class I family. Heterodimer of an alpha chain and a beta chain (beta-2-microglobulin). Homodimer; disulfide-linked. Binds to LILRB1 and LILRB2.

The protein localises to the cell membrane. Its function is as follows. Involved in the presentation of foreign antigens to the immune system. In Pan troglodytes (Chimpanzee), this protein is Patr class I histocompatibility antigen, alpha chain G (Patr-G).